The primary structure comprises 484 residues: MKIPEAVNHINVQNNIDLVDGKINPNKDTKALQKNISCVTNSSSSGISEKHLDHCADTVKSFLRKSIAAQSYSKMFSQGTSFKSLNLSIEAPSGARSSFRSLEHLDKVSRHYLSEIIQKTHPLSSDERHLLSIIINSDFNFRHQSNANLSNNTLNIKSFDKIKSENIQTYKNTFSEDIEEIANHDFVFFGVEISNHQETLPLNKTHHTVDFGANAYIIDHDSPYGYMTLTDHFDNAIPPVFYHEHQSFFLDNFKEVVDEVSRYVHGNQGKTDVPIFNTKDMRLGIGLHLIDFIRKSKDQRFREFCYNKNIDPVSLDRIINFVFQLEYHIPRMLSTDNFKKIKLRDISLEDAIKASNYEEINNKVTDKKMAHQALAYSLGNKKADIALYLLSKFNFTKQDVAEMEKMKNNRYCNLYDVEYLLSKDGANYKVLEYFINNGLVDVNKKFQKVNSGDTMLDNAMKSKDSKMIDFLLKNGAILGKRFEI.

H143, Q144, S145, N155, K157, T169, N172, and T173 together coordinate NAD(+). E326 is a catalytic residue. ANK repeat units follow at residues 369 to 398 (MAHQ…FTKQ), 413 to 444 (NLYD…DVNK), and 451 to 480 (SGDT…ILGK).

Belongs to the OspC family. As to quaternary structure, interacts with host calmodulin (CALM1, CALM2 and/or CALM3); specifically interacts with the apo form of calmodulin, preventing calcium-binding.

It localises to the secreted. The protein resides in the host cytoplasm. It catalyses the reaction L-arginyl-[protein] + NAD(+) = ADP-riboxanated L-argininyl-[protein] + nicotinamide + NH4(+) + H(+). With respect to regulation, interaction with host calmodulin (CALM1, CALM2 and/or CALM3) is required to mediate arginine ADP-riboxanation of host caspases. ADP-riboxanase effector that inhibits host cell pyroptosis. Acts by mediating arginine ADP-riboxanation of host CASP4/CASP11, blocking CASP4/CASP11 autoprocessing. This prevents CASP4 activation and ability to recognize and cleave GSDMD, thereby inhibiting LPS-induced pyroptosis. ADP-riboxanation takes place in two steps: OspC3 first catalyzes ADP-ribosylation of target Arg, and then initiates a deamination to remove one N-omega group. Independently of its ADP-riboxanase activity, acts as an inhibitor of calcium signaling by inhibiting host calmodulin, preventing activation of the JAK-STAT signaling pathway in response to interferon-beta. Mechanistically, acts by binding to the apo form of calmodulin, preventing calcium-binding and ability to activate host CaMK2 (CAMKII), which is required to stimulate the JAK-STAT signaling pathway in response to interferon-beta. In Shigella flexneri, this protein is Arginine ADP-riboxanase OspC3.